We begin with the raw amino-acid sequence, 96 residues long: MKFRPLGDRVLVKRVEEETKTKGGIIIPDTVKEKPQEGEVVAVGPGARNDKGDIVALDVKAGDRILFGKWSGTEVKVDGQDLLIMKESDVLGIVEA.

It belongs to the GroES chaperonin family. In terms of assembly, heptamer of 7 subunits arranged in a ring. Interacts with the chaperonin GroEL.

It localises to the cytoplasm. Functionally, together with the chaperonin GroEL, plays an essential role in assisting protein folding. The GroEL-GroES system forms a nano-cage that allows encapsulation of the non-native substrate proteins and provides a physical environment optimized to promote and accelerate protein folding. GroES binds to the apical surface of the GroEL ring, thereby capping the opening of the GroEL channel. The chain is Co-chaperonin GroES from Caulobacter sp. (strain K31).